Reading from the N-terminus, the 382-residue chain is G2/mitotic-specific cyclin-B2 (382 aa).

The span at 1 to 12 shows a compositional bias: polar residues; it reads MSSVEAVTQQQL. The tract at residues 1 to 78 is disordered; it reads MSSVEAVTQQ…HTSAGDPAPI (78 aa). Positions 38–47 are enriched in low complexity; sequence NRNAAAAANR.

Belongs to the cyclin family. Cyclin AB subfamily. As to quaternary structure, interacts with the CDK1 protein kinase to form a serine/threonine kinase holoenzyme complex also known as maturation promoting factor (MPF). The cyclin subunit imparts substrate specificity to the complex.

Functionally, essential for the control of the cell cycle at the G2/M (mitosis) transition. The protein is G2/mitotic-specific cyclin-B2 (ccnb2) of Oryzias javanicus (Javanese ricefish).